A 653-amino-acid polypeptide reads, in one-letter code: ATP-dependent zinc metalloprotease FtsH 1 (653 aa).

The segment at 1-20 (MPENKNDKENKNDKENKNTK) is disordered. Topologically, residues 1–30 (MPENKNDKENKNDKENKNTKEEKKKVKFSN) are cytoplasmic. The helical transmembrane segment at 31–51 (IIWVYIIFAVFFIGALISLNW) threads the bilayer. At 52 to 126 (ENNPIISYSE…EYVESVGTKW (75 aa)) the chain is on the periplasmic side. Residues 127–147 (WFGLLINIIPIVVMVLFFFWL) traverse the membrane as a helical segment. Over 148 to 653 (YRSASAGARS…VVNHVNYQPV (506 aa)) the chain is Cytoplasmic. 219 to 226 (GPPGTGKT) provides a ligand contact to ATP. Position 441 (H441) interacts with Zn(2+). E442 is a catalytic residue. Positions 445 and 518 each coordinate Zn(2+).

It in the central section; belongs to the AAA ATPase family. In the C-terminal section; belongs to the peptidase M41 family. As to quaternary structure, homohexamer. Requires Zn(2+) as cofactor.

The protein resides in the cell inner membrane. Acts as a processive, ATP-dependent zinc metallopeptidase for both cytoplasmic and membrane proteins. Plays a role in the quality control of integral membrane proteins. The chain is ATP-dependent zinc metalloprotease FtsH 1 from Petrotoga mobilis (strain DSM 10674 / SJ95).